Reading from the N-terminus, the 1361-residue chain is DNA-directed RNA polymerase subunit beta (1361 aa).

The protein belongs to the RNA polymerase beta chain family. The RNAP catalytic core consists of 2 alpha, 1 beta, 1 beta' and 1 omega subunit. When a sigma factor is associated with the core the holoenzyme is formed, which can initiate transcription.

The enzyme catalyses RNA(n) + a ribonucleoside 5'-triphosphate = RNA(n+1) + diphosphate. Functionally, DNA-dependent RNA polymerase catalyzes the transcription of DNA into RNA using the four ribonucleoside triphosphates as substrates. In Dichelobacter nodosus (strain VCS1703A), this protein is DNA-directed RNA polymerase subunit beta.